The primary structure comprises 123 residues: Small ribosomal subunit protein uS12cz/uS12cy (123 aa).

This sequence belongs to the universal ribosomal protein uS12 family. Part of the 30S ribosomal subunit.

It is found in the plastid. Its subcellular location is the chloroplast. With S4 and S5 plays an important role in translational accuracy. Located at the interface of the 30S and 50S subunits. The polypeptide is Small ribosomal subunit protein uS12cz/uS12cy (rps12-A) (Populus alba (White poplar)).